We begin with the raw amino-acid sequence, 323 residues long: tRNA U34 carboxymethyltransferase (323 aa).

Carboxy-S-adenosyl-L-methionine-binding positions include lysine 91, tryptophan 105, lysine 110, glycine 130, 180-181 (IE), methionine 196, tyrosine 200, and arginine 315.

The protein belongs to the class I-like SAM-binding methyltransferase superfamily. CmoB family. As to quaternary structure, homotetramer.

The catalysed reaction is carboxy-S-adenosyl-L-methionine + 5-hydroxyuridine(34) in tRNA = 5-carboxymethoxyuridine(34) in tRNA + S-adenosyl-L-homocysteine + H(+). Catalyzes carboxymethyl transfer from carboxy-S-adenosyl-L-methionine (Cx-SAM) to 5-hydroxyuridine (ho5U) to form 5-carboxymethoxyuridine (cmo5U) at position 34 in tRNAs. The protein is tRNA U34 carboxymethyltransferase of Geobacter sp. (strain M21).